The sequence spans 544 residues: Probable protein kinase UbiB (544 aa).

The region spanning 123-501 (DFDLVPLASA…KRQQATGKFL (379 aa)) is the Protein kinase domain. ATP is bound by residues 129–137 (LASASIAQV) and Lys-152. Asp-287 acts as the Proton acceptor in catalysis. Transmembrane regions (helical) follow at residues 496 to 516 (ATGK…AILV) and 519 to 539 (TYEQ…LFSW).

Belongs to the ABC1 family. UbiB subfamily.

The protein localises to the cell inner membrane. It participates in cofactor biosynthesis; ubiquinone biosynthesis [regulation]. Is probably a protein kinase regulator of UbiI activity which is involved in aerobic coenzyme Q (ubiquinone) biosynthesis. The protein is Probable protein kinase UbiB of Vibrio vulnificus (strain YJ016).